A 247-amino-acid chain; its full sequence is Probable transcriptional regulatory protein lpp1249 (247 aa).

It belongs to the TACO1 family.

It is found in the cytoplasm. This is Probable transcriptional regulatory protein lpp1249 from Legionella pneumophila (strain Paris).